The sequence spans 346 residues: Short-wave-sensitive opsin 1 (346 aa).

At methionine 1–alanine 31 the chain is on the extracellular side. Residue asparagine 12 is glycosylated (N-linked (GlcNAc...) asparagine). Residues phenylalanine 32–alanine 56 traverse the membrane as a helical segment. At threonine 57–asparagine 68 the chain is on the cytoplasmic side. A helical membrane pass occupies residues tyrosine 69–cysteine 94. The Extracellular portion of the chain corresponds to histidine 95–glutamate 108. A disulfide bond links cysteine 105 and cysteine 182. A helical transmembrane segment spans residues alanine 109–phenylalanine 128. Residues glutamate 129–histidine 147 lie on the Cytoplasmic side of the membrane. A helical transmembrane segment spans residues alanine 148 to serine 171. At arginine 172–histidine 197 the chain is on the extracellular side. Residues tyrosine 198 to leucine 225 traverse the membrane as a helical segment. The Cytoplasmic portion of the chain corresponds to arginine 226–histidine 247. A helical membrane pass occupies residues methionine 248–valine 271. At asparagine 272 to tyrosine 279 the chain is on the extracellular side. The chain crosses the membrane as a helical span at residues leucine 280 to methionine 304. N6-(retinylidene)lysine is present on lysine 291. Over asparagine 305–histidine 346 the chain is Cytoplasmic. The disordered stretch occupies residues threonine 322–histidine 346. Over residues serine 330–histidine 346 the composition is skewed to low complexity.

Belongs to the G-protein coupled receptor 1 family. Opsin subfamily. Phosphorylated on some or all of the serine and threonine residues present in the C-terminal region. Expressed in cone photoreceptor cells.

It is found in the cell membrane. It localises to the photoreceptor inner segment. The protein resides in the cell projection. Its subcellular location is the cilium. The protein localises to the photoreceptor outer segment. It is found in the cytoplasm. It localises to the perinuclear region. Visual pigments are the light-absorbing molecules that mediate vision. They consist of an apoprotein, opsin, covalently linked to cis-retinal. Required for the maintenance of cone outer segment organization in the ventral retina, but not essential for the maintenance of functioning cone photoreceptors. Involved in ensuring correct abundance and localization of retinal membrane proteins. May increase spectral sensitivity in dim light. This is Short-wave-sensitive opsin 1 (Opn1sw) from Rattus norvegicus (Rat).